The sequence spans 167 residues: Photosystem I assembly protein Ycf3 (167 aa).

TPR repeat units lie at residues 35–68 (AFAY…EVDA), 72–105 (SYIL…NPSL), and 120–153 (GEQA…APTS).

Belongs to the Ycf3 family.

The protein localises to the plastid. Its subcellular location is the chloroplast thylakoid membrane. In terms of biological role, essential for the assembly of the photosystem I (PSI) complex. May act as a chaperone-like factor to guide the assembly of the PSI subunits. This chain is Photosystem I assembly protein Ycf3, found in Chlorokybus atmophyticus (Soil alga).